Here is a 661-residue protein sequence, read N- to C-terminus: UvrABC system protein B (661 aa).

Residues 24–209 (NGLNKGYRFQ…IFPSYQDEGI (186 aa)) enclose the Helicase ATP-binding domain. Position 37–44 (37–44 (GVTGSGKT)) interacts with ATP. The Beta-hairpin motif lies at 90–113 (YYDYYQPEAYVPTKDLYIEKSADI). In terms of domain architecture, Helicase C-terminal spans 430–594 (DLVNEIVQVK…IIKPLMEDIF (165 aa)). In terms of domain architecture, UVR spans 622 to 657 (EEYAALLEEEMYKAASELRYEDAARLRDELFKIKEE).

This sequence belongs to the UvrB family. As to quaternary structure, forms a heterotetramer with UvrA during the search for lesions. Interacts with UvrC in an incision complex.

Its subcellular location is the cytoplasm. In terms of biological role, the UvrABC repair system catalyzes the recognition and processing of DNA lesions. A damage recognition complex composed of 2 UvrA and 2 UvrB subunits scans DNA for abnormalities. Upon binding of the UvrA(2)B(2) complex to a putative damaged site, the DNA wraps around one UvrB monomer. DNA wrap is dependent on ATP binding by UvrB and probably causes local melting of the DNA helix, facilitating insertion of UvrB beta-hairpin between the DNA strands. Then UvrB probes one DNA strand for the presence of a lesion. If a lesion is found the UvrA subunits dissociate and the UvrB-DNA preincision complex is formed. This complex is subsequently bound by UvrC and the second UvrB is released. If no lesion is found, the DNA wraps around the other UvrB subunit that will check the other stand for damage. In Fervidobacterium nodosum (strain ATCC 35602 / DSM 5306 / Rt17-B1), this protein is UvrABC system protein B.